The following is an 81-amino-acid chain: Photosystem I iron-sulfur center (81 aa).

2 4Fe-4S ferredoxin-type domains span residues 2-31 and 39-68; these read VHVV…MVPW and IASS…IRVY. [4Fe-4S] cluster contacts are provided by Cys-11, Cys-14, Cys-17, Cys-21, Cys-48, Cys-51, Cys-54, and Cys-58.

As to quaternary structure, the eukaryotic PSI reaction center is composed of at least 11 subunits. Requires [4Fe-4S] cluster as cofactor.

It is found in the plastid. The protein resides in the chloroplast thylakoid membrane. It catalyses the reaction reduced [plastocyanin] + hnu + oxidized [2Fe-2S]-[ferredoxin] = oxidized [plastocyanin] + reduced [2Fe-2S]-[ferredoxin]. Its function is as follows. Apoprotein for the two 4Fe-4S centers FA and FB of photosystem I (PSI); essential for photochemical activity. FB is the terminal electron acceptor of PSI, donating electrons to ferredoxin. The C-terminus interacts with PsaA/B/D and helps assemble the protein into the PSI complex. Required for binding of PsaD and PsaE to PSI. PSI is a plastocyanin/cytochrome c6-ferredoxin oxidoreductase, converting photonic excitation into a charge separation, which transfers an electron from the donor P700 chlorophyll pair to the spectroscopically characterized acceptors A0, A1, FX, FA and FB in turn. The polypeptide is Photosystem I iron-sulfur center (Cyanidium caldarium (Red alga)).